A 352-amino-acid polypeptide reads, in one-letter code: Small ribosomal subunit biogenesis GTPase RsgA (352 aa).

Over residues 1 to 11 (MTKRKLSKGQQ) the composition is skewed to basic residues. Residues 1–35 (MTKRKLSKGQQRRVQENHKKRLQSKEKKNHVELDD) form a disordered region. Residues 13-33 (RVQENHKKRLQSKEKKNHVEL) show a composition bias toward basic and acidic residues. A CP-type G domain is found at 114–276 (YYDGIKPIAA…VIDSPGVREF (163 aa)). Residues 162–165 (NKVD) and 216–224 (GQSGVGKSS) contribute to the GTP site. Positions 300, 305, 307, and 313 each coordinate Zn(2+).

This sequence belongs to the TRAFAC class YlqF/YawG GTPase family. RsgA subfamily. In terms of assembly, monomer. Associates with 30S ribosomal subunit, binds 16S rRNA. Zn(2+) is required as a cofactor.

It is found in the cytoplasm. One of several proteins that assist in the late maturation steps of the functional core of the 30S ribosomal subunit. Helps release RbfA from mature subunits. May play a role in the assembly of ribosomal proteins into the subunit. Circularly permuted GTPase that catalyzes slow GTP hydrolysis, GTPase activity is stimulated by the 30S ribosomal subunit. This is Small ribosomal subunit biogenesis GTPase RsgA from Proteus mirabilis (strain HI4320).